A 252-amino-acid polypeptide reads, in one-letter code: Urease accessory protein UreD (252 aa).

This sequence belongs to the UreD family. UreD, UreF and UreG form a complex that acts as a GTP-hydrolysis-dependent molecular chaperone, activating the urease apoprotein by helping to assemble the nickel containing metallocenter of UreC. The UreE protein probably delivers the nickel.

It localises to the cytoplasm. Functionally, required for maturation of urease via the functional incorporation of the urease nickel metallocenter. This Streptomyces avermitilis (strain ATCC 31267 / DSM 46492 / JCM 5070 / NBRC 14893 / NCIMB 12804 / NRRL 8165 / MA-4680) protein is Urease accessory protein UreD.